The primary structure comprises 252 residues: Phosphate import ATP-binding protein PstB (252 aa).

The ABC transporter domain maps to 5 to 247 (LIASDVNIFY…PRDERTEAYV (243 aa)). 37 to 44 (GPSGCGKT) lines the ATP pocket.

This sequence belongs to the ABC transporter superfamily. Phosphate importer (TC 3.A.1.7) family. As to quaternary structure, the complex is composed of two ATP-binding proteins (PstB), two transmembrane proteins (PstC and PstA) and a solute-binding protein (PstS).

It is found in the cell membrane. It catalyses the reaction phosphate(out) + ATP + H2O = ADP + 2 phosphate(in) + H(+). Its function is as follows. Part of the ABC transporter complex PstSACB involved in phosphate import. Responsible for energy coupling to the transport system. The protein is Phosphate import ATP-binding protein PstB of Deinococcus geothermalis (strain DSM 11300 / CIP 105573 / AG-3a).